A 207-amino-acid chain; its full sequence is 3-demethoxyubiquinol 3-hydroxylase (207 aa).

Fe cation-binding residues include glutamate 56, glutamate 86, histidine 89, glutamate 138, glutamate 170, and histidine 173.

Belongs to the COQ7 family. The cofactor is Fe cation.

The protein resides in the cell membrane. The catalysed reaction is a 5-methoxy-2-methyl-3-(all-trans-polyprenyl)benzene-1,4-diol + AH2 + O2 = a 3-demethylubiquinol + A + H2O. It participates in cofactor biosynthesis; ubiquinone biosynthesis. Its function is as follows. Catalyzes the hydroxylation of 2-nonaprenyl-3-methyl-6-methoxy-1,4-benzoquinol during ubiquinone biosynthesis. The polypeptide is 3-demethoxyubiquinol 3-hydroxylase (Cupriavidus pinatubonensis (strain JMP 134 / LMG 1197) (Cupriavidus necator (strain JMP 134))).